A 190-amino-acid chain; its full sequence is 3-isopropylmalate dehydratase small subunit (190 aa).

This sequence belongs to the LeuD family. LeuD type 1 subfamily. In terms of assembly, heterodimer of LeuC and LeuD.

It catalyses the reaction (2R,3S)-3-isopropylmalate = (2S)-2-isopropylmalate. It participates in amino-acid biosynthesis; L-leucine biosynthesis; L-leucine from 3-methyl-2-oxobutanoate: step 2/4. Its function is as follows. Catalyzes the isomerization between 2-isopropylmalate and 3-isopropylmalate, via the formation of 2-isopropylmaleate. The chain is 3-isopropylmalate dehydratase small subunit from Staphylococcus aureus (strain MSSA476).